The primary structure comprises 355 residues: Spore germination protein XB (355 aa).

10 helical membrane-spanning segments follow: residues 2 to 24, 34 to 56, 69 to 91, 106 to 128, 135 to 157, 180 to 197, 210 to 232, 265 to 287, 299 to 321, and 326 to 348; these read VNFF…VIII, DSWI…VFIV, LMRN…YLII, FYLP…FYNI, IALT…MIAN, GMIY…ILFL, LIIV…IVEF, VYQW…PDVL, ISIL…SFYW, and VFLP…FVWV.

This sequence belongs to the amino acid-polyamine-organocation (APC) superfamily. Spore germination protein (SGP) (TC 2.A.3.9) family.

It is found in the cell membrane. Functionally, may allow B.anthracis to germinate within phagocytic cells and therefore involved in virulence. In Bacillus anthracis, this protein is Spore germination protein XB (gerXB).